Consider the following 254-residue polypeptide: GTP cyclohydrolase III (254 aa).

It belongs to the archaeal-type GTP cyclohydrolase family.

It catalyses the reaction GTP + 3 H2O = 2-amino-5-formylamino-6-(5-phospho-D-ribosylamino)pyrimidin-4(3H)-one + 2 phosphate + 2 H(+). Functionally, catalyzes the formation of 2-amino-5-formylamino-6-ribofuranosylamino-4(3H)-pyrimidinone ribonucleotide monophosphate and inorganic phosphate from GTP. Also has an independent pyrophosphate phosphohydrolase activity. The chain is GTP cyclohydrolase III from Methanobrevibacter smithii (strain ATCC 35061 / DSM 861 / OCM 144 / PS).